Reading from the N-terminus, the 128-residue chain is Dehydrin Xero 1 (128 aa).

Residues 1 to 19 (MESYQNQSGAQQTHQQLDQ) show a composition bias toward polar residues. A disordered region spans residues 1–128 (MESYQNQSGA…IKEKLPGGHH (128 aa)). Composition is skewed to low complexity over residues 23-41 (PFPA…PAVA) and 48-60 (GMLH…SSSS). A compositionally biased stretch (basic and acidic residues) spans 75–91 (GITEKIKEKLPGHHDSN). The segment covering 92-104 (KTSSLGSTTTAYD) has biased composition (polar residues). A compositionally biased stretch (basic and acidic residues) spans 107-128 (TVHHEKKGMMEKIKEKLPGGHH).

Belongs to the plant dehydrin family.

The polypeptide is Dehydrin Xero 1 (XERO1) (Arabidopsis thaliana (Mouse-ear cress)).